Consider the following 99-residue polypeptide: Protein S100-Z (99 aa).

EF-hand domains follow at residues 13–48 (ITVF…FLMS) and 50–85 (KDPM…LTVA). The Ca(2+) site is built by Ser20, Glu23, Asp25, Lys28, Glu33, Asp63, Asn65, Asp67, Glu69, and Glu74.

The protein belongs to the S-100 family. Homodimer. Homodimers may assemble into larger stable oligomers. In larva at 5 days post-fertilization, shows very restricted expression only in a few large cells of the olfactory placode. More widely expressed in the adult. Expressed at higher levels in gut than in spleen, head kidney and gill.

The protein is Protein S100-Z of Danio rerio (Zebrafish).